The sequence spans 92 residues: MSFQRDYESEWNAALIEEYGEGGSGFSHGRFASLRMCEQRLYRPPGKVEEGTVKCPGCGSRRVHALQRQTRSADEPMTLFAMCSECGKRWTR.

The TFIIS-type zinc-finger motif lies at Gly51 to Thr91. 4 residues coordinate Zn(2+): Cys55, Cys58, Cys83, and Cys86.

The protein is Putative transcription elongation factor S-II-like protein 81R of Dryophytes versicolor (chameleon treefrog).